Consider the following 877-residue polypeptide: Transcriptional corepressor SEUSS (877 aa).

Disordered regions lie at residues M1–R42 and L272–P295. Low complexity predominate over residues L272 to P292. The dimerization stretch occupies residues P321–L563. The Nuclear localization signal signature appears at R330–R344. 3 disordered regions span residues I560 to Q599, Q612 to G633, and G666 to S753. Residues Q582 to N618 adopt a coiled-coil conformation. Over residues Q590 to Q599 the composition is skewed to low complexity. The span at T614–G633 shows a compositional bias: polar residues. Composition is skewed to low complexity over residues Q688–Q703 and Q711–N725. The span at G726 to M741 shows a compositional bias: polar residues.

The protein belongs to the adn1/SEU family. As to quaternary structure, forms a corepressor complex with LUG; LUG is the transcription repressor subunit and SEU the specific DNA-binding adapter. Interacts with AGL24-AP1 and SVP-AP1 dimers when complexed to SEU. Interacts with AP1/AGL7 and SEP3/AGL9. Binds to LUH. In terms of tissue distribution, expressed in root, leaves, seedlings, vegetative and reproductive shoot apical meristems, seeds, floral meristems and all floral organs.

It is found in the nucleus. The protein localises to the nucleoplasm. Functionally, DNA-binding adapter subunit of the SEU-LUG transcriptional corepressor of the C class floral homeotic gene AGAMOUS during the early stages of floral meristem development. Is part of the A class cadastral complex that define the boundaries between the A and C class homeotic genes expression and function. Interacts together with APETALA2 and LEUNIG to repress AGAMOUS expression. In association with LUG, regulates petal shape through AGAMOUS-independent mechanisms. Controls cell division during petal development and enable the proper patterning of petal blade vasculature. Required for the proper elaboration of petal polarity along the adaxial/abaxial axis. May act through direct or indirect regulation of PHABULOSA and YAB1 and thus regulate cellular proliferation within the developing petal blade. In association with AINTEGUMENTA (ANT), coordinates patterning cues and cellular proliferation along the three positional axes of the developing gynoecium. Required for the development of the medial ridge and subsequent ovule initiation. This chain is Transcriptional corepressor SEUSS (SEU), found in Arabidopsis thaliana (Mouse-ear cress).